The chain runs to 552 residues: Nucleoside-diphosphatase mig-23 (552 aa).

The Cytoplasmic segment spans residues methionine 1–arginine 6. Residues phenylalanine 7–valine 27 form a helical membrane-spanning segment. At glutamate 28–glutamate 489 the chain is on the lumenal side. The Proton acceptor role is filled by glutamate 174. 2 N-linked (GlcNAc...) asparagine glycosylation sites follow: asparagine 190 and asparagine 284. A helical membrane pass occupies residues serine 490–alanine 510. At lysine 511–alanine 552 the chain is on the cytoplasmic side.

The protein belongs to the GDA1/CD39 NTPase family. In terms of tissue distribution, expressed in body wall muscles.

The protein resides in the golgi apparatus membrane. The catalysed reaction is a ribonucleoside 5'-diphosphate + H2O = a ribonucleoside 5'-phosphate + phosphate + H(+). Its function is as follows. Seems to be able to hydrolyze ADP, UDP and GDP. Supports mig-17 glycosylation and surface expression, which is required for proper migration of distal tip cells during gonad morphogenesis. The polypeptide is Nucleoside-diphosphatase mig-23 (mig-23) (Caenorhabditis elegans).